The primary structure comprises 249 residues: Hydantoin racemase (249 aa).

It belongs to the HyuE racemase family. Homohexamer.

The enzyme catalyses a D-5-monosubstituted hydantoin = a L-5-monosubstituted hydantoin. The catalysed reaction is D-5-[2-(methylsulfanyl)ethyl]hydantoin = L-5-[2-(methysulfanyl)ethyl]hydantoin. It catalyses the reaction D-5-benzylhydantoin = L-5-benzylhydantoin. It carries out the reaction D-5-isopropylhydantoin = L-5-isopropylhydantoin. The enzyme catalyses D-5-isobutylhydantoin = L-5-isobutylhydantoin. Its activity is regulated as follows. Strongly inhibited by Cu(2+) and Zn(2+). Slightly stimulated by the addition of Mn(2+) or Co(2+), but also by metal-chelating agents such as EDTA or EGTA, indicating that the enzyme is not a metalloenzyme. Its function is as follows. Involved in the asymmetric conversion of racemic 5-substituted hydantoins to the corresponding L-amino acids. Catalyzes the racemization via enolization of D- and L-5-monosubstituted hydantoins. Is able to racemize 5-substituted hydantoins having aromatic or aliphatic substituents such as 5-(2-methylthioethyl)hydantoin, 5-isopropylhydantoin, 5-isobutylhydantoin and 5-benzylhydantoin. The sequence is that of Hydantoin racemase from Pseudomonas sp. (strain NS671).